Consider the following 413-residue polypeptide: Acyltransferase mokF (413 aa).

Position 93 (Arg93) interacts with monacolin J. Ser96 (acyl-ester intermediate) is an active-site residue. Residues Arg193, Tyr208, and Tyr278 each coordinate monacolin J. Gly386 contacts 2-methylbutanoate.

Belongs to the class-A beta-lactamase family.

The enzyme catalyses monacolin J carboxylate + (S)-2-methylbutanoyl-[2-methylbutanoate polyketide synthase] = lovastatin carboxylate + holo-[2-methylbutanoate polyketide synthase]. It functions in the pathway polyketide biosynthesis; lovastatin biosynthesis. Functionally, acyltransferase; part of the gene cluster that mediates the biosynthesis of monakolin K, also known as lovastatin, and which acts as a potent competitive inhibitor of HMG-CoA reductase. Monakolin K biosynthesis is performed in two stages. The first stage is catalyzed by the nonaketide synthase mokA, which belongs to type I polyketide synthases and catalyzes the iterative nine-step formation of the polyketide. This PKS stage is completed by the action of dehydrogenase mokE, which catalyzes the NADPH-dependent reduction of the unsaturated tetra-, penta- and heptaketide intermediates that arise during the mokA-mediated biosynthesis of the nonaketide chain and leads to dihydromonacolin L. Covalently bound dihydromonacolin L is released from mokA by the mokD esterase. Conversion of dihydromonacolin L into monacolin L and then monacolin J is subsequently performed with the participation of molecular oxygen and P450 monoogygenase mokC. Finally, mokF performs the conversion of monacoline J to monacoline K through the addition of the side-chain diketide moiety (2R)-2-methylbutanoate produced by the diketide synthase mokB. This is Acyltransferase mokF from Monascus pilosus (Red mold).